Here is an 899-residue protein sequence, read N- to C-terminus: RNA-binding motif protein 25 (899 aa).

Polar residues predominate over residues 1–20; it reads MADESSSPATGDPNSQKPES. The disordered stretch occupies residues 1-112; the sequence is MADESSSPAT…SMPQYQPQPG (112 aa). Residues 26–63 show a composition bias toward pro residues; it reads IPNPNPNPSLTPPPPQQHSQPPVAPLVPPGPPYAPPAQ. The 78-residue stretch at 204 to 281 folds into the RRM domain; that stretch reads TTIYIGKIAT…QELLVNVNQA (78 aa). Disordered stretches follow at residues 298–572 and 611–778; these read KKAK…EQNL and GESA…KESG. 2 stretches are compositionally biased toward basic and acidic residues: residues 317 to 340 and 354 to 372; these read EQDK…KENI and EADR…ERLK. Residues 375–384 are compositionally biased toward pro residues; it reads PLPPPPPPPA. Over residues 430–505 the composition is skewed to basic and acidic residues; that stretch reads WSKRNDRRSR…QYEKEKEKEK (76 aa). A coiled-coil region spans residues 434–578; that stretch reads NDRRSRERGE…EQNLQQQQLD (145 aa). Positions 515-524 are enriched in acidic residues; the sequence is YEEEEEEDDD. Positions 526–533 match the Nuclear localization signal 1 motif; it reads SRRRWHRA. Residues 533–568 show a composition bias toward basic and acidic residues; sequence AALDERRRRQLREKEDDLADRLKEEEEVAEAKRSAE. Positions 626-640 are enriched in polar residues; the sequence is GSGNESMAIDNNSGS. Composition is skewed to basic and acidic residues over residues 723–733 and 740–778; these read PKEETIETEKQ and DKAS…KESG. Residues 735-742 carry the Nuclear localization signal 2 motif; sequence SRRSHDKA. Residues 802 to 899 enclose the PWI domain; that stretch reads EDLFSYEINW…EAGVPVKSKA (98 aa).

Specifically associates with functional splicing complexes. Associates with exon junction complex (EJC) proteins. In terms of processing, phosphorylated; the phosphorylation level is repressed by abscisic acid (ABA).

The protein resides in the nucleus. In terms of biological role, RNA-binding protein that acts as a regulator of alternative pre-mRNA splicing. Negative regulator of responses to abscisic acid (ABA), including in early development. This Arabidopsis thaliana (Mouse-ear cress) protein is RNA-binding motif protein 25.